We begin with the raw amino-acid sequence, 197 residues long: uncharacterized protein (197 aa).

The interval 1–31 (MMHFRKKSSISNTSDHDGANRASDVKISEDD) is disordered. 2 positions are modified to phosphoserine: S11 and S23. The span at 14–31 (SDHDGANRASDVKISEDD) shows a compositional bias: basic and acidic residues. Residues K26 and K32 each participate in a glycyl lysine isopeptide (Lys-Gly) (interchain with G-Cter in ubiquitin) cross-link. The disordered stretch occupies residues 157–197 (VGGASSQMYGEQAVYQPQQHVQTEEKQKKKKKGLFGRMKKK). Residues 158–177 (GGASSQMYGEQAVYQPQQHV) are compositionally biased toward polar residues. Basic residues predominate over residues 184 to 197 (KKKKKGLFGRMKKK).

This sequence to yeast YGR273c.

This is an uncharacterized protein from Saccharomyces cerevisiae (strain ATCC 204508 / S288c) (Baker's yeast).